The sequence spans 119 residues: MILGIGIDIIELNRIEKMINGKLNFIERILTETERDVAAKLKGKRLVEFVAGRFAAKEAYSKAVGTGIGKEVSFLDIEIKNDQKGKPVLFTNTEYIVHLSISHSREFAVAQVVLESPSC.

Mg(2+) contacts are provided by D8 and E58.

This sequence belongs to the P-Pant transferase superfamily. AcpS family. Mg(2+) is required as a cofactor.

Its subcellular location is the cytoplasm. It catalyses the reaction apo-[ACP] + CoA = holo-[ACP] + adenosine 3',5'-bisphosphate + H(+). Transfers the 4'-phosphopantetheine moiety from coenzyme A to a Ser of acyl-carrier-protein. The chain is Holo-[acyl-carrier-protein] synthase from Bacillus cytotoxicus (strain DSM 22905 / CIP 110041 / 391-98 / NVH 391-98).